A 397-amino-acid polypeptide reads, in one-letter code: CCA-adding enzyme (397 aa).

G26 and R29 together coordinate ATP. Residues G26 and R29 each contribute to the CTP site. Mg(2+)-binding residues include D39 and D41. R110, D153, R156, R159, and R162 together coordinate ATP. 5 residues coordinate CTP: R110, D153, R156, R159, and R162.

Belongs to the tRNA nucleotidyltransferase/poly(A) polymerase family. Bacterial CCA-adding enzyme type 3 subfamily. As to quaternary structure, homodimer. It depends on Mg(2+) as a cofactor.

It catalyses the reaction a tRNA precursor + 2 CTP + ATP = a tRNA with a 3' CCA end + 3 diphosphate. The catalysed reaction is a tRNA with a 3' CCA end + 2 CTP + ATP = a tRNA with a 3' CCACCA end + 3 diphosphate. In terms of biological role, catalyzes the addition and repair of the essential 3'-terminal CCA sequence in tRNAs without using a nucleic acid template. Adds these three nucleotides in the order of C, C, and A to the tRNA nucleotide-73, using CTP and ATP as substrates and producing inorganic pyrophosphate. tRNA 3'-terminal CCA addition is required both for tRNA processing and repair. Also involved in tRNA surveillance by mediating tandem CCA addition to generate a CCACCA at the 3' terminus of unstable tRNAs. While stable tRNAs receive only 3'-terminal CCA, unstable tRNAs are marked with CCACCA and rapidly degraded. This Bacillus cytotoxicus (strain DSM 22905 / CIP 110041 / 391-98 / NVH 391-98) protein is CCA-adding enzyme.